Reading from the N-terminus, the 371-residue chain is Methionine import ATP-binding protein MetN (371 aa).

Residues 29–270 (IRIEGVRKVY…PRHEVTRRFV (242 aa)) enclose the ABC transporter domain. 67-74 (GRSGAGKS) is a binding site for ATP.

The protein belongs to the ABC transporter superfamily. Methionine importer (TC 3.A.1.24) family. In terms of assembly, the complex is composed of two ATP-binding proteins (MetN), two transmembrane proteins (MetI) and a solute-binding protein (MetQ).

It localises to the cell inner membrane. It carries out the reaction L-methionine(out) + ATP + H2O = L-methionine(in) + ADP + phosphate + H(+). It catalyses the reaction D-methionine(out) + ATP + H2O = D-methionine(in) + ADP + phosphate + H(+). Functionally, part of the ABC transporter complex MetNIQ involved in methionine import. Responsible for energy coupling to the transport system. The polypeptide is Methionine import ATP-binding protein MetN (Rhodopseudomonas palustris (strain BisA53)).